Reading from the N-terminus, the 667-residue chain is Probable Na(+)/H(+) antiporter nhx-9 (667 aa).

Transmembrane regions (helical) follow at residues 41-61, 73-93, 97-117, 128-148, 165-185, 192-212, 236-256, and 268-288; these read VYVITVWLLIASLAKILFNLM, LLIIVGLALGWILHQTSLSGA, SHTFFLYLLPPIIFDAGYFMP, VLVFSVFGTIWNTFAIGGSLL, ILVFSALISAVDPVAVIAVFE, FLFINVFGEALFNDGVTVVLY, LSFFVVALGGAAVGIIFAIAA, and ILAPVFIFVLPYMAYLTAEMV. Asparagine 310 carries N-linked (GlcNAc...) asparagine glycosylation. 4 helical membrane-spanning segments follow: residues 325–345, 351–371, 390–410, and 418–438; these read MLAQSSETVIFMFLGLSTISS, LYFICATLFFCLIYRAIGIVV, FIMSYGGLRGAIAYGLVVSIP, and MFITATIAVIYFTVFLQGITI. The disordered stretch occupies residues 637-667; that stretch reads TEQLPSETPFHSGRRQSTGDLNATRRADFNV. At threonine 644 the chain carries Phosphothreonine.

Belongs to the monovalent cation:proton antiporter 1 (CPA1) transporter (TC 2.A.36) family. Post-translationally, phosphorylated. In terms of tissue distribution, in early stage larva, expressed in the twin excretory cell processes. At later larval stages, expression is more restricted, resulting in a 'beads on a chain' appearance.

Its subcellular location is the cell membrane. Functionally, serves some physiological function other than regulation of cellular pH. The protein is Probable Na(+)/H(+) antiporter nhx-9 (nhx-9) of Caenorhabditis elegans.